Here is a 159-residue protein sequence, read N- to C-terminus: ATP synthase subunit b' (159 aa).

The chain crosses the membrane as a helical span at residues 27–47 (ATLPLMAVQFLILTVILNALL).

It belongs to the ATPase B chain family. As to quaternary structure, F-type ATPases have 2 components, F(1) - the catalytic core - and F(0) - the membrane proton channel. F(1) has five subunits: alpha(3), beta(3), gamma(1), delta(1), epsilon(1). F(0) has four main subunits: a(1), b(1), b'(1) and c(10-14). The alpha and beta chains form an alternating ring which encloses part of the gamma chain. F(1) is attached to F(0) by a central stalk formed by the gamma and epsilon chains, while a peripheral stalk is formed by the delta, b and b' chains.

Its subcellular location is the cellular thylakoid membrane. F(1)F(0) ATP synthase produces ATP from ADP in the presence of a proton or sodium gradient. F-type ATPases consist of two structural domains, F(1) containing the extramembraneous catalytic core and F(0) containing the membrane proton channel, linked together by a central stalk and a peripheral stalk. During catalysis, ATP synthesis in the catalytic domain of F(1) is coupled via a rotary mechanism of the central stalk subunits to proton translocation. In terms of biological role, component of the F(0) channel, it forms part of the peripheral stalk, linking F(1) to F(0). The b'-subunit is a diverged and duplicated form of b found in plants and photosynthetic bacteria. This Synechococcus sp. (strain PCC 6716) protein is ATP synthase subunit b'.